A 323-amino-acid chain; its full sequence is DNA primase small subunit PriS (323 aa).

Residues Asp97, Asp99, and Asp274 contribute to the active site.

It belongs to the eukaryotic-type primase small subunit family. As to quaternary structure, heterodimer of a small subunit (PriS) and a large subunit (PriL). Mg(2+) serves as cofactor. It depends on Mn(2+) as a cofactor.

Its function is as follows. Catalytic subunit of DNA primase, an RNA polymerase that catalyzes the synthesis of short RNA molecules used as primers for DNA polymerase during DNA replication. The small subunit contains the primase catalytic core and has DNA synthesis activity on its own. Binding to the large subunit stabilizes and modulates the activity, increasing the rate of DNA synthesis while decreasing the length of the DNA fragments, and conferring RNA synthesis capability. The DNA polymerase activity may enable DNA primase to also catalyze primer extension after primer synthesis. May also play a role in DNA repair. The polypeptide is DNA primase small subunit PriS (Methanothermobacter thermautotrophicus (strain ATCC 29096 / DSM 1053 / JCM 10044 / NBRC 100330 / Delta H) (Methanobacterium thermoautotrophicum)).